Consider the following 423-residue polypeptide: Probable efflux pump mfs2 (423 aa).

Transmembrane regions (helical) follow at residues threonine 21 to valine 41, serine 49 to histidine 69, leucine 79 to valine 99, leucine 111 to valine 131, tryptophan 138 to histidine 158, alanine 220 to leucine 240, tyrosine 256 to tyrosine 278, isoleucine 295 to alanine 315, histidine 319 to phenylalanine 339, alanine 360 to leucine 380, and leucine 392 to tryptophan 411.

This sequence belongs to the major facilitator superfamily.

The protein localises to the membrane. In terms of biological role, probable efflux pump; part of the gene cluster 27 that mediates the biosynthesis of asparasone A, a sclerotium-specific anthraquinone pigment important for sclerotial survival. This Aspergillus flavus (strain ATCC 200026 / FGSC A1120 / IAM 13836 / NRRL 3357 / JCM 12722 / SRRC 167) protein is Probable efflux pump mfs2.